Consider the following 495-residue polypeptide: Glucose-6-phosphate 1-dehydrogenase (495 aa).

NADP(+)-binding positions include 11–18 (GASGDLAK), R45, 84–85 (DV), and K147. Substrate is bound by residues H177, K181, E215, and D234. H239 (proton acceptor) is an active-site residue. Residues K339 and K344 each contribute to the substrate site.

It belongs to the glucose-6-phosphate dehydrogenase family.

It carries out the reaction D-glucose 6-phosphate + NADP(+) = 6-phospho-D-glucono-1,5-lactone + NADPH + H(+). It functions in the pathway carbohydrate degradation; pentose phosphate pathway; D-ribulose 5-phosphate from D-glucose 6-phosphate (oxidative stage): step 1/3. Catalyzes the oxidation of glucose 6-phosphate to 6-phosphogluconolactone. The polypeptide is Glucose-6-phosphate 1-dehydrogenase (Streptococcus pneumoniae serotype 4 (strain ATCC BAA-334 / TIGR4)).